We begin with the raw amino-acid sequence, 306 residues long: UDP-N-acetylenolpyruvoylglucosamine reductase (306 aa).

Positions 34 to 199 constitute an FAD-binding PCMH-type domain; it reads KSGGAAEWLF…VAATFRGHAE (166 aa). Arg-179 is a catalytic residue. Residues 215-234 form a disordered region; the sequence is REASQPLRSRTGGSTFKNPQ. The span at 220–232 shows a compositional bias: polar residues; sequence PLRSRTGGSTFKN. The active-site Proton donor is Ser-228. Glu-298 is an active-site residue.

This sequence belongs to the MurB family. Requires FAD as cofactor.

The protein resides in the cytoplasm. It catalyses the reaction UDP-N-acetyl-alpha-D-muramate + NADP(+) = UDP-N-acetyl-3-O-(1-carboxyvinyl)-alpha-D-glucosamine + NADPH + H(+). Its pathway is cell wall biogenesis; peptidoglycan biosynthesis. Functionally, cell wall formation. The protein is UDP-N-acetylenolpyruvoylglucosamine reductase of Rhizorhabdus wittichii (strain DSM 6014 / CCUG 31198 / JCM 15750 / NBRC 105917 / EY 4224 / RW1) (Sphingomonas wittichii).